The sequence spans 597 residues: Lipoprotein LpqB (597 aa).

A signal peptide spans 1–28 (MTPGSRSAMRSRSVCGAIALAVLVTVSG). Cysteine 29 carries N-palmitoyl cysteine lipidation. The S-diacylglycerol cysteine moiety is linked to residue cysteine 29. The span at 39–51 (QAIGTINRDSPGS) shows a compositional bias: polar residues. The segment at 39 to 59 (QAIGTINRDSPGSSVAAPAPG) is disordered.

This sequence belongs to the LpqB lipoprotein family.

The protein localises to the cell membrane. The protein is Lipoprotein LpqB of Rhodococcus opacus (strain B4).